We begin with the raw amino-acid sequence, 511 residues long: Type 2 DNA topoisomerase 6 subunit B-like (511 aa).

A disordered region spans residues 398–485 (DSAQGTEDAP…RALAPGRASL (88 aa)). Polar residues predominate over residues 408-422 (DNSSLELLADTSGQA). Residues 440 to 451 (LRSARAPSPSEA) show a composition bias toward low complexity. A compositionally biased stretch (basic and acidic residues) spans 466 to 475 (RGREHREAHG).

Belongs to the TOP6B-like family. As to quaternary structure, heterotetramer of SPO11 and 2 TOP6BL chains. Interacts with SPO11. Detected in lung, spleen,colon and in skeletal muscle. Expressed in the ovaries, Fallopian tubes and uterus.

It localises to the chromosome. Component of a topoisomerase 6 complex specifically required for meiotic recombination. Together with SPO11, mediates DNA cleavage that forms the double-strand breaks (DSB) that initiate meiotic recombination. The complex promotes relaxation of negative and positive supercoiled DNA and DNA decatenation through cleavage and ligation cycles. This is Type 2 DNA topoisomerase 6 subunit B-like from Homo sapiens (Human).